Consider the following 1001-residue polypeptide: Ulvan lyase, long isoform (1001 aa).

Residues 1 to 21 form the signal peptide; the sequence is MNGLKMLLFSTTLLTAFTLHA. 126–127 is a substrate binding site; sequence SH. Histidine 127 serves as the catalytic Proton donor/acceptor. Ca(2+)-binding residues include aspartate 189, aspartate 199, and lysine 201. Substrate is bound by residues tyrosine 280 and arginine 297. The Ca(2+) site is built by aspartate 300, aspartate 303, and tyrosine 305. Tyrosine 361 lines the substrate pocket.

The protein belongs to the polysaccharide lyase 24 family.

In terms of biological role, ulvan lyase involved in ulvan degradation. Ulvan is the main polysaccharide component of the Ulvales (green seaweed) cell wall. It is composed of disaccharide building blocks comprising 3-sulfated rhamnose (Rha3S) linked to D-glucuronic acid (GlcA), L-iduronic acid (IduA), or D-xylose (Xyl). Ulvan lyase catalyzes preferentially the endolytic cleavage of the glycosidic bond between Rha3S and the uronic acid GlcA, but not IduA, producing oligosaccharides that have unsaturated 4-deoxy-L-threo-hex-4-enopyranosiduronic acid (deltaUA) at the non-reducing end. The most abundant end products in the degradation of the ulvan polysaccharide were deltaUA-Rha3S disaccharides and deltaUA-Rha3S-IduA-Rha3S and deltaUA-Rha3S-Xyl-Rha3S tetrasaccharides. In Pseudoalteromonas sp. (strain PLSV), this protein is Ulvan lyase, long isoform.